Here is a 147-residue protein sequence, read N- to C-terminus: Hemoglobin subunit epsilon-Y2 (147 aa).

Residues 3–147 enclose the Globin domain; that stretch reads NFTAEEKTLI…VATALSHKYH (145 aa). Residue Ser-51 is modified to Phosphoserine. Residues His-64 and His-93 each contribute to the heme b site.

Belongs to the globin family. In terms of tissue distribution, high expression in yolk sac blood islands, fetal liver, and embryonic erythrocytes. Very low levels in adult liver and spleen.

Hemoglobin epsilon chain is a beta-type chain found in early embryos. This Mus musculus (Mouse) protein is Hemoglobin subunit epsilon-Y2 (Hbb-y).